The following is a 138-amino-acid chain: Ribulose bisphosphate carboxylase small subunit (138 aa).

This sequence belongs to the RuBisCO small chain family. Heterohexadecamer of 8 large and 8 small subunits.

It localises to the plastid. The protein resides in the chloroplast. Functionally, ruBisCO catalyzes two reactions: the carboxylation of D-ribulose 1,5-bisphosphate, the primary event in carbon dioxide fixation, as well as the oxidative fragmentation of the pentose substrate in the photorespiration process. Both reactions occur simultaneously and in competition at the same active site. Although the small subunit is not catalytic it is essential for maximal activity. This Pyropia suborbiculata (Red alga) protein is Ribulose bisphosphate carboxylase small subunit.